Here is a 124-residue protein sequence, read N- to C-terminus: UPF0102 protein TM1040_0449 (124 aa).

Belongs to the UPF0102 family.

The sequence is that of UPF0102 protein TM1040_0449 from Ruegeria sp. (strain TM1040) (Silicibacter sp.).